Here is an 858-residue protein sequence, read N- to C-terminus: DNA mismatch repair protein MutS (858 aa).

613 to 620 serves as a coordination point for ATP; that stretch reads GPNMAGKS.

This sequence belongs to the DNA mismatch repair MutS family.

This protein is involved in the repair of mismatches in DNA. It is possible that it carries out the mismatch recognition step. This protein has a weak ATPase activity. The protein is DNA mismatch repair protein MutS of Dehalococcoides mccartyi (strain ATCC BAA-2100 / JCM 16839 / KCTC 5957 / BAV1).